Reading from the N-terminus, the 64-residue chain is Large ribosomal subunit protein bL33 (64 aa).

It belongs to the bacterial ribosomal protein bL33 family.

The chain is Large ribosomal subunit protein bL33 from Prochlorococcus marinus (strain MIT 9313).